Here is a 460-residue protein sequence, read N- to C-terminus: Chromosomal replication initiator protein DnaA (460 aa).

Positions M1–E83 are domain I, interacts with DnaA modulators. Basic and acidic residues predominate over residues A78–L121. The disordered stretch occupies residues A78–V122. A domain II region spans residues E83–P123. The interval N124 to A340 is domain III, AAA+ region. ATP-binding residues include G168, G170, K171, and T172. Residues S341 to T460 form a domain IV, binds dsDNA region.

Belongs to the DnaA family. In terms of assembly, oligomerizes as a right-handed, spiral filament on DNA at oriC.

The protein localises to the cytoplasm. Functionally, plays an essential role in the initiation and regulation of chromosomal replication. ATP-DnaA binds to the origin of replication (oriC) to initiate formation of the DNA replication initiation complex once per cell cycle. Binds the DnaA box (a 9 base pair repeat at the origin) and separates the double-stranded (ds)DNA. Forms a right-handed helical filament on oriC DNA; dsDNA binds to the exterior of the filament while single-stranded (ss)DNA is stabiized in the filament's interior. The ATP-DnaA-oriC complex binds and stabilizes one strand of the AT-rich DNA unwinding element (DUE), permitting loading of DNA polymerase. After initiation quickly degrades to an ADP-DnaA complex that is not apt for DNA replication. Binds acidic phospholipids. In Geobacter sp. (strain M21), this protein is Chromosomal replication initiator protein DnaA.